A 319-amino-acid polypeptide reads, in one-letter code: tRNA uridine(34) hydroxylase (319 aa).

One can recognise a Rhodanese domain in the interval 124 to 218; that stretch reads LDEDTVILDA…YGKNEETKGE (95 aa). Cys178 functions as the Cysteine persulfide intermediate in the catalytic mechanism.

This sequence belongs to the TrhO family.

It carries out the reaction uridine(34) in tRNA + AH2 + O2 = 5-hydroxyuridine(34) in tRNA + A + H2O. Functionally, catalyzes oxygen-dependent 5-hydroxyuridine (ho5U) modification at position 34 in tRNAs. This is tRNA uridine(34) hydroxylase from Listeria monocytogenes serovar 1/2a (strain ATCC BAA-679 / EGD-e).